A 184-amino-acid polypeptide reads, in one-letter code: ATP synthase subunit b, chloroplastic (184 aa).

Residues 27–49 (LATNLINLSVVLGVLIFFGKGVL) form a helical membrane-spanning segment.

The protein belongs to the ATPase B chain family. F-type ATPases have 2 components, F(1) - the catalytic core - and F(0) - the membrane proton channel. F(1) has five subunits: alpha(3), beta(3), gamma(1), delta(1), epsilon(1). F(0) has four main subunits: a(1), b(1), b'(1) and c(10-14). The alpha and beta chains form an alternating ring which encloses part of the gamma chain. F(1) is attached to F(0) by a central stalk formed by the gamma and epsilon chains, while a peripheral stalk is formed by the delta, b and b' chains.

The protein localises to the plastid. Its subcellular location is the chloroplast thylakoid membrane. Its function is as follows. F(1)F(0) ATP synthase produces ATP from ADP in the presence of a proton or sodium gradient. F-type ATPases consist of two structural domains, F(1) containing the extramembraneous catalytic core and F(0) containing the membrane proton channel, linked together by a central stalk and a peripheral stalk. During catalysis, ATP synthesis in the catalytic domain of F(1) is coupled via a rotary mechanism of the central stalk subunits to proton translocation. Component of the F(0) channel, it forms part of the peripheral stalk, linking F(1) to F(0). The chain is ATP synthase subunit b, chloroplastic from Lactuca sativa (Garden lettuce).